An 828-amino-acid polypeptide reads, in one-letter code: Periplasmic nitrate reductase (828 aa).

Positions 1-31 (MKLSRRSFMKANAVAAAAAAAGLSVPGVARA) form a signal peptide, tat-type signal. A 4Fe-4S Mo/W bis-MGD-type domain is found at 39-95 (IKWDKAPCRFCGTGCGVLVGTQQGRVVACQGDPDAPVNRGLNCIKGYFLPKIMYGKD). Cysteine 46, cysteine 49, cysteine 53, and cysteine 81 together coordinate [4Fe-4S] cluster. Mo-bis(molybdopterin guanine dinucleotide) contacts are provided by residues lysine 83, glutamine 150, asparagine 175, cysteine 179, 212–219 (WGSNMAEM), 243–247 (STFQH), 262–264 (QSD), methionine 372, glutamine 376, asparagine 482, 508–509 (SD), lysine 531, aspartate 558, and 718–727 (TGRVLEHWHT). Phenylalanine 794 contacts substrate. Asparagine 802 and lysine 819 together coordinate Mo-bis(molybdopterin guanine dinucleotide).

It belongs to the prokaryotic molybdopterin-containing oxidoreductase family. NasA/NapA/NarB subfamily. As to quaternary structure, component of the periplasmic nitrate reductase NapAB complex composed of NapA and NapB. [4Fe-4S] cluster is required as a cofactor. Requires Mo-bis(molybdopterin guanine dinucleotide) as cofactor. Predicted to be exported by the Tat system. The position of the signal peptide cleavage has not been experimentally proven.

It is found in the periplasm. It catalyses the reaction 2 Fe(II)-[cytochrome] + nitrate + 2 H(+) = 2 Fe(III)-[cytochrome] + nitrite + H2O. Functionally, catalytic subunit of the periplasmic nitrate reductase complex NapAB. Receives electrons from NapB and catalyzes the reduction of nitrate to nitrite. This Salmonella paratyphi C (strain RKS4594) protein is Periplasmic nitrate reductase.